The chain runs to 663 residues: Leishmanolysin-like peptidase (663 aa).

H246 contacts Zn(2+). Residue E247 is part of the active site. H250 and H353 together coordinate Zn(2+).

It belongs to the peptidase M8 family. Zn(2+) is required as a cofactor.

Its subcellular location is the cytoplasm. Functionally, essential for the coordination of mitotic progression, and also plays a role in cell migration. In Caenorhabditis elegans, this protein is Leishmanolysin-like peptidase.